Consider the following 398-residue polypeptide: Glucose-1-phosphate adenylyltransferase (398 aa).

Alpha-D-glucose 1-phosphate is bound by residues tyrosine 100, glycine 165, 180 to 181 (EK), and serine 191.

Belongs to the bacterial/plant glucose-1-phosphate adenylyltransferase family. In terms of assembly, homotetramer.

It carries out the reaction alpha-D-glucose 1-phosphate + ATP + H(+) = ADP-alpha-D-glucose + diphosphate. Its pathway is glycan biosynthesis; glycogen biosynthesis. Its function is as follows. Involved in the biosynthesis of ADP-glucose, a building block required for the elongation reactions to produce glycogen. Catalyzes the reaction between ATP and alpha-D-glucose 1-phosphate (G1P) to produce pyrophosphate and ADP-Glc. The sequence is that of Glucose-1-phosphate adenylyltransferase from Desulfitobacterium hafniense (strain Y51).